The chain runs to 854 residues: Espin (854 aa).

ANK repeat units lie at residues 1-31 (MALE…GPSL), 35-64 (LDAL…LPAA), 69-99 (NGAT…RVQD), 103-133 (SGAT…DPTA), 137-167 (MGAL…GVNA), 171-201 (NGAT…DPHA), 205-235 (DGMT…SLSE), 239-268 (DGAT…EISA), and 271-300 (WGGT…ELDV). S338 and S342 each carry phosphoserine. Basic and acidic residues predominate over residues 338-349 (SRDPSAELEAKQ). Disordered stretches follow at residues 338-400 (SRDP…CGLS), 415-474 (NPEL…MQTK), 487-713 (KELS…AGFQ), 765-788 (KMQE…SMPA), and 800-832 (EERE…TLGY). Over residues 352–377 (SGMSSPNTTVSVQPLNFDLSSPTSTL) the composition is skewed to polar residues. Residues 378–389 (SNYDSCSSSHSS) are compositionally biased toward low complexity. Positions 428-463 (PTPPPPPPSFPPPPPPPGTQLPPPPPGYPAPKPPVG) are enriched in pro residues. Positions 487–505 (KELSSCDGHDGLRRQDSSR) are enriched in basic and acidic residues. Position 515 is a phosphoserine (S515). A compositionally biased stretch (pro residues) spans 595–620 (LPPPPPPPPPPLPEAASSPPPAPPLP). Low complexity predominate over residues 633–642 (SSSSTGSTKS). 2 stretches are compositionally biased toward polar residues: residues 643 to 652 (FNMMSPTGDN) and 667 to 678 (PTPQSKGLTTVF). S647 carries the phosphoserine modification. The 18-residue stretch at 651–668 (DNSELLAEIKAGKSLKPT) folds into the WH2 domain. S690 and S696 each carry phosphoserine. Positions 692–703 (LPSVSPALSPVR) are enriched in low complexity. Residues 756 to 830 (QVMVRKMQLK…KEQSEKLRTL (75 aa)) are a coiled coil.

Monomer. Binds F-actin in a Ca(2+)-resistant fashion. Interacts (via N-terminus) with BAIAP2 (via SH3-domain). Interacts with PFN2. Interacts with MYO3A (via C-terminus). Interacts with MYO3B (via C-terminus).

The protein localises to the cytoplasm. It is found in the cytoskeleton. It localises to the cell projection. The protein resides in the stereocilium. Its subcellular location is the microvillus. Multifunctional actin-bundling protein. Plays a major role in regulating the organization, dimension, dynamics and signaling capacities of the actin filament-rich microvilli in the mechanosensory and chemosensory cells. Required for the assembly and stabilization of the stereociliary parallel actin bundles. Plays a crucial role in the formation and maintenance of inner ear hair cell stereocilia. Involved in the elongation of actin in stereocilia. In extrastriolar hair cells, required for targeting MYO3B to stereocilia tips, and for regulation of stereocilia diameter and staircase formation. In Homo sapiens (Human), this protein is Espin (ESPN).